The chain runs to 79 residues: Hematopoietic cell signal transducer (79 aa).

The N-terminal stretch at 1 to 18 (MAPPGHLLFLFLLPVAAS) is a signal peptide. At 19-35 (QTNEGSCSGCGPLSLPL) the chain is on the extracellular side. A helical transmembrane segment spans residues 36-56 (LAGLVAADAVMSLLIVGVVFV). At 57–79 (CMRLHSRPAQEDGRVYINMPGRG) the chain is on the cytoplasmic side. Y72 is modified (phosphotyrosine). Residues 72–74 (YIN) are GRB2 binding site. The segment at 72–75 (YINM) is PIK3R1 binding site.

Belongs to the DAP10 family. In terms of assembly, homodimer; Disulfide-linked. Heterohexamer composed of four subunits of HCST/DAP10 and two subunits of KLRK1. Interacts (via transmembrane domain) with KLRK1 (via transmembrane domain); the interaction is required for KLRK1 NK cell surface and induces NK cell-mediated cytotoxicity. Interacts with PIK3R1 and GRB2. Interacts with CLEC5A. Forms an CLEC5A/TYROBP/HCST trimolecular complex depending almost solely on TYROBP. Interacts with CD300H. Phosphorylated; PIK3R1 and GRB2 associate specifically with tyrosine-phosphorylated HCST. In terms of processing, O-glycosylated.

It is found in the membrane. Transmembrane adapter protein which associates with KLRK1 to form an activation receptor KLRK1-HCST in lymphoid and myeloid cells; this receptor plays a major role in triggering cytotoxicity against target cells expressing cell surface ligands such as MHC class I chain-related MICA and MICB, and UL16-binding proteins (ULBPs); these ligands are up-regulated by stress conditions and pathological state such as viral infection and tumor transformation. Functions as a docking site for PI3-kinase PIK3R1 and GRB2. Interaction of ULBPs with KLRK1-HCST triggers calcium mobilization and activation of the PIK3R1, MAP2K/ERK, and JAK2/STAT5 signaling pathways. Both PIK3R1 and GRB2 are required for full KLRK1-HCST-mediated activation and ultimate killing of target cells. In NK cells, KLRK1-HCST signaling directly induces cytotoxicity and enhances cytokine production initiated via DAP12/TYROBP-associated receptors. In T-cells, it provides primarily costimulation for TCR-induced signals. KLRK1-HCST receptor plays a role in immune surveillance against tumors and is required for cytolysis of tumors cells; indeed, melanoma cells that do not express KLRK1 ligands escape from immune surveillance mediated by NK cells. The protein is Hematopoietic cell signal transducer (Hcst) of Rattus norvegicus (Rat).